The sequence spans 367 residues: Phospho-N-acetylmuramoyl-pentapeptide-transferase (367 aa).

The next 10 helical transmembrane spans lie at Ile-13 to Leu-33, Leu-49 to Leu-69, Met-95 to Ala-115, Leu-119 to Ile-139, Leu-154 to Ala-174, Trp-183 to Val-203, Ile-215 to Ala-235, Thr-237 to Ala-257, Ala-281 to Val-301, and Val-347 to Phe-367.

This sequence belongs to the glycosyltransferase 4 family. MraY subfamily. Requires Mg(2+) as cofactor.

It localises to the cell inner membrane. It catalyses the reaction UDP-N-acetyl-alpha-D-muramoyl-L-alanyl-gamma-D-glutamyl-meso-2,6-diaminopimeloyl-D-alanyl-D-alanine + di-trans,octa-cis-undecaprenyl phosphate = di-trans,octa-cis-undecaprenyl diphospho-N-acetyl-alpha-D-muramoyl-L-alanyl-D-glutamyl-meso-2,6-diaminopimeloyl-D-alanyl-D-alanine + UMP. Its pathway is cell wall biogenesis; peptidoglycan biosynthesis. Catalyzes the initial step of the lipid cycle reactions in the biosynthesis of the cell wall peptidoglycan: transfers peptidoglycan precursor phospho-MurNAc-pentapeptide from UDP-MurNAc-pentapeptide onto the lipid carrier undecaprenyl phosphate, yielding undecaprenyl-pyrophosphoryl-MurNAc-pentapeptide, known as lipid I. This Trichormus variabilis (strain ATCC 29413 / PCC 7937) (Anabaena variabilis) protein is Phospho-N-acetylmuramoyl-pentapeptide-transferase.